The chain runs to 228 residues: Vesicle transport protein SEC20 (228 aa).

Over 1-199 the chain is Cytoplasmic; that stretch reads MAAPQDVHVR…LITKYNRREL (199 aa). The stretch at 37-90 forms a coiled coil; the sequence is LSELTELNTKVKEKFQQLKHRIQELEQSAKEQDKESEKQLLLQEVENHKKQMLS. A helical; Anchor for type IV membrane protein transmembrane segment spans residues 200–220; it reads TDKLLIFLALALFLATVLYIV. At 221–228 the chain is on the lumenal side; it reads KKRLFPFL.

It belongs to the SEC20 family. As to quaternary structure, component of a SNARE complex consisting of STX18, USE1L, BNIP1/SEC20L and SEC22B. Interacts directly with STX18, RINT1/TIP20L and NAPA. Interacts with ZW10 through RINT1. Interacts with BCL2. Interacts with RNF186. Interacts with RNF185. Interacts with SQSTM1; increased by 'Lys-63'-linked polyubiquitination of BNIP1. Polyubiquitinated. 'Lys-63'-linked polyubiquitination by RNF185 increases the interaction with the autophagy receptor SQSTM1. Undergoes 'Lys-29'- and 'Lys-63'-linked polyubiquitination by RNF186 that may regulate BNIP1 localization to the mitochondrion.

It localises to the endoplasmic reticulum membrane. The protein resides in the mitochondrion membrane. Its function is as follows. As part of a SNARE complex may be involved in endoplasmic reticulum membranes fusion and be required for the maintenance of endoplasmic reticulum organization. Also plays a role in apoptosis. It is for instance required for endoplasmic reticulum stress-induced apoptosis. As a substrate of RNF185 interacting with SQSTM1, might also be involved in mitochondrial autophagy. The sequence is that of Vesicle transport protein SEC20 from Rattus norvegicus (Rat).